The chain runs to 445 residues: tRNA modification GTPase MnmE (445 aa).

(6S)-5-formyl-5,6,7,8-tetrahydrofolate-binding residues include arginine 25, glutamate 83, and lysine 121. Residues 217–371 (GVRVVILGPP…LLTLIQEKSR (155 aa)) form the TrmE-type G domain. GTP contacts are provided by residues 227–232 (NAGKST), 246–252 (SEHPGTT), and 271–274 (DTAG). Residues serine 231 and threonine 252 each coordinate Mg(2+). Position 445 (lysine 445) interacts with (6S)-5-formyl-5,6,7,8-tetrahydrofolate.

The protein belongs to the TRAFAC class TrmE-Era-EngA-EngB-Septin-like GTPase superfamily. TrmE GTPase family. Homodimer. Heterotetramer of two MnmE and two MnmG subunits. The cofactor is K(+).

It is found in the cytoplasm. Exhibits a very high intrinsic GTPase hydrolysis rate. Involved in the addition of a carboxymethylaminomethyl (cmnm) group at the wobble position (U34) of certain tRNAs, forming tRNA-cmnm(5)s(2)U34. This chain is tRNA modification GTPase MnmE, found in Anaplasma phagocytophilum (strain HZ).